Consider the following 353-residue polypeptide: Phospho-N-acetylmuramoyl-pentapeptide-transferase (353 aa).

10 helical membrane-spanning segments follow: residues 22-42 (FAFF…ITWA), 65-85 (TPTM…LSCI), 88-108 (DNIF…IGLI), 129-149 (LLTQ…SSEL), 161-181 (PLFD…ISSS), 192-212 (GLAT…LYLS), 228-248 (GLGE…GFLW), 256-276 (VFMG…LAII), 281-301 (ILLL…ILQV), and 330-350 (KIIV…LASI).

It belongs to the glycosyltransferase 4 family. MraY subfamily. Mg(2+) serves as cofactor.

The protein resides in the cell inner membrane. The enzyme catalyses UDP-N-acetyl-alpha-D-muramoyl-L-alanyl-gamma-D-glutamyl-meso-2,6-diaminopimeloyl-D-alanyl-D-alanine + di-trans,octa-cis-undecaprenyl phosphate = di-trans,octa-cis-undecaprenyl diphospho-N-acetyl-alpha-D-muramoyl-L-alanyl-D-glutamyl-meso-2,6-diaminopimeloyl-D-alanyl-D-alanine + UMP. Its pathway is cell wall biogenesis; peptidoglycan biosynthesis. Catalyzes the initial step of the lipid cycle reactions in the biosynthesis of the cell wall peptidoglycan: transfers peptidoglycan precursor phospho-MurNAc-pentapeptide from UDP-MurNAc-pentapeptide onto the lipid carrier undecaprenyl phosphate, yielding undecaprenyl-pyrophosphoryl-MurNAc-pentapeptide, known as lipid I. In Campylobacter jejuni subsp. jejuni serotype O:23/36 (strain 81-176), this protein is Phospho-N-acetylmuramoyl-pentapeptide-transferase.